The following is a 46-amino-acid chain: MEVTPLETGRARSHQKASTAAQPHAADEKMTGSTARRYLSQDHQSV.

Residues 1–46 (MEVTPLETGRARSHQKASTAAQPHAADEKMTGSTARRYLSQDHQSV) are disordered.

This is an uncharacterized protein from Treponema pallidum (strain Nichols).